The primary structure comprises 249 residues: Ubiquinone biosynthesis O-methyltransferase (249 aa).

Residues Arg41, Gly72, Asp93, and Met136 each contribute to the S-adenosyl-L-methionine site.

The protein belongs to the methyltransferase superfamily. UbiG/COQ3 family.

The enzyme catalyses a 3-demethylubiquinol + S-adenosyl-L-methionine = a ubiquinol + S-adenosyl-L-homocysteine + H(+). It catalyses the reaction a 3-(all-trans-polyprenyl)benzene-1,2-diol + S-adenosyl-L-methionine = a 2-methoxy-6-(all-trans-polyprenyl)phenol + S-adenosyl-L-homocysteine + H(+). It functions in the pathway cofactor biosynthesis; ubiquinone biosynthesis. O-methyltransferase that catalyzes the 2 O-methylation steps in the ubiquinone biosynthetic pathway. The sequence is that of Ubiquinone biosynthesis O-methyltransferase from Mesorhizobium japonicum (strain LMG 29417 / CECT 9101 / MAFF 303099) (Mesorhizobium loti (strain MAFF 303099)).